The sequence spans 137 residues: Ribonuclease VapC27 (137 aa).

The region spanning 7–125 (VDTSVAIPLL…ATRDARAKDT (119 aa)) is the PINc domain. Positions 8 and 101 each coordinate Mg(2+).

Belongs to the PINc/VapC protein family. Interacts with cognate antitoxin VapB27. Mg(2+) is required as a cofactor.

The protein resides in the secreted. Functionally, probably the toxic component of a type II toxin-antitoxin (TA) system. An RNase. Its cognate antitoxin is VapB27. The protein is Ribonuclease VapC27 of Mycobacterium tuberculosis (strain ATCC 25618 / H37Rv).